Here is a 190-residue protein sequence, read N- to C-terminus: Peptidyl-tRNA hydrolase (190 aa).

Tyr18 is a tRNA binding site. The active-site Proton acceptor is His23. TRNA-binding residues include Phe65, Asn67, and Asn113.

Belongs to the PTH family. Monomer.

The protein localises to the cytoplasm. The catalysed reaction is an N-acyl-L-alpha-aminoacyl-tRNA + H2O = an N-acyl-L-amino acid + a tRNA + H(+). Its function is as follows. Hydrolyzes ribosome-free peptidyl-tRNAs (with 1 or more amino acids incorporated), which drop off the ribosome during protein synthesis, or as a result of ribosome stalling. In terms of biological role, catalyzes the release of premature peptidyl moieties from peptidyl-tRNA molecules trapped in stalled 50S ribosomal subunits, and thus maintains levels of free tRNAs and 50S ribosomes. The chain is Peptidyl-tRNA hydrolase from Akkermansia muciniphila (strain ATCC BAA-835 / DSM 22959 / JCM 33894 / BCRC 81048 / CCUG 64013 / CIP 107961 / Muc).